Reading from the N-terminus, the 433-residue chain is L-saccharopine oxidase (433 aa).

The N-terminal stretch at Met-1–Ala-18 is a signal peptide. 4 N-linked (GlcNAc...) asparagine glycosylation sites follow: Asn-24, Asn-119, Asn-188, and Asn-229.

This sequence belongs to the MSOX/MTOX family. In terms of assembly, monomer. It depends on FAD as a cofactor.

It is found in the secreted. Its subcellular location is the cytoplasm. The protein resides in the nucleus. It carries out the reaction L-saccharopine + O2 + H2O = (S)-2-amino-6-oxohexanoate + L-glutamate + H2O2. This chain is L-saccharopine oxidase, found in Schizosaccharomyces pombe (strain 972 / ATCC 24843) (Fission yeast).